The primary structure comprises 365 residues: 1-aminocyclopropane-1-carboxylate oxidase homolog 1 (365 aa).

The region spanning 212–313 (CTNSLLLLGH…RISVACFFSS (102 aa)) is the Fe2OG dioxygenase domain. Fe cation-binding residues include H238, D240, and H294.

The protein belongs to the iron/ascorbate-dependent oxidoreductase family. It depends on Fe cation as a cofactor.

The polypeptide is 1-aminocyclopropane-1-carboxylate oxidase homolog 1 (Arabidopsis thaliana (Mouse-ear cress)).